Consider the following 74-residue polypeptide: Exodeoxyribonuclease 7 small subunit (74 aa).

Belongs to the XseB family. In terms of assembly, heterooligomer composed of large and small subunits.

It localises to the cytoplasm. The enzyme catalyses Exonucleolytic cleavage in either 5'- to 3'- or 3'- to 5'-direction to yield nucleoside 5'-phosphates.. In terms of biological role, bidirectionally degrades single-stranded DNA into large acid-insoluble oligonucleotides, which are then degraded further into small acid-soluble oligonucleotides. In Leuconostoc citreum (strain KM20), this protein is Exodeoxyribonuclease 7 small subunit.